The primary structure comprises 165 residues: Phosphopantetheine adenylyltransferase (165 aa).

S11 serves as a coordination point for substrate. ATP is bound by residues 11–12 (SF) and H19. Substrate is bound by residues K43, T76, and R90. ATP contacts are provided by residues 91 to 93 (GIR), E101, and 126 to 132 (FSFISSS).

The protein belongs to the bacterial CoaD family. As to quaternary structure, homohexamer. Mg(2+) is required as a cofactor.

It is found in the cytoplasm. The enzyme catalyses (R)-4'-phosphopantetheine + ATP + H(+) = 3'-dephospho-CoA + diphosphate. It functions in the pathway cofactor biosynthesis; coenzyme A biosynthesis; CoA from (R)-pantothenate: step 4/5. Functionally, reversibly transfers an adenylyl group from ATP to 4'-phosphopantetheine, yielding dephospho-CoA (dPCoA) and pyrophosphate. The polypeptide is Phosphopantetheine adenylyltransferase (Latilactobacillus sakei subsp. sakei (strain 23K) (Lactobacillus sakei subsp. sakei)).